The primary structure comprises 205 residues: Probable ADP-ribosylation factor At2g15310 (205 aa).

Residue G2 is the site of N-myristoyl glycine attachment. GTP-binding positions include G24–T31, D67–Q71, and N126–D129.

This sequence belongs to the small GTPase superfamily. Arf family.

It localises to the golgi apparatus. In terms of biological role, GTP-binding protein involved in protein trafficking; may modulate vesicle budding and uncoating within the Golgi apparatus. The chain is Probable ADP-ribosylation factor At2g15310 from Arabidopsis thaliana (Mouse-ear cress).